A 2208-amino-acid chain; its full sequence is Glutamate synthase 1 [NADH], chloroplastic (2208 aa).

The N-terminal 49 residues, 1–49, are a transit peptide targeting the chloroplast; that stretch reads MSAASSSSVLHLRTNQQLLSLRSLKNSTSVASQLAVTSGVSRRRSCTAR. C117 functions as the Nucleophile in the catalytic mechanism. Positions 117 to 521 constitute a Glutamine amidotransferase type-2 domain; sequence CGVGFVAELS…PGMMLLVDFE (405 aa). The segment at 1040–1067 is disordered; sequence GKSNTGEGGELPSRMEPLADGSRNPKRS. 1211–1268 is an FMN binding site; the sequence is LAETHQTLVANDLRGRTVLQTDGQLKTGRDVAVAALLGAEEFGFSTAPLITLGCIMMR. Residues C1264, C1270, and C1275 each coordinate [3Fe-4S] cluster. Residue 1995–2009 coordinates NAD(+); it reads GGGDTGTDCIGTSIR.

The protein belongs to the glutamate synthase family. In terms of assembly, monomer. Requires [3Fe-4S] cluster as cofactor. FAD serves as cofactor. FMN is required as a cofactor. In terms of tissue distribution, highly expressed in roots and at low levels in leaves.

The protein resides in the plastid. Its subcellular location is the chloroplast. It catalyses the reaction 2 L-glutamate + NAD(+) = L-glutamine + 2-oxoglutarate + NADH + H(+). It functions in the pathway amino-acid biosynthesis; L-glutamate biosynthesis via GLT pathway; L-glutamate from 2-oxoglutarate and L-glutamine (NAD(+) route): step 1/1. Its pathway is energy metabolism; nitrogen metabolism. Involved in glutamate biosynthesis. Required for non-photorespiratory ammonium assimilation. Probably involved in primary ammonium assimilation in roots. The chain is Glutamate synthase 1 [NADH], chloroplastic (GLT1) from Arabidopsis thaliana (Mouse-ear cress).